The primary structure comprises 30 residues: Kalata-B17 (30 aa).

Residues 1–30 (GIPCAESCVYIPCTITALLGCKCKDQVCYN) constitute a cross-link (cyclopeptide (Gly-Asn)). Disulfide bonds link Cys-4–Cys-21, Cys-8–Cys-23, and Cys-13–Cys-28.

Post-translationally, this is a cyclic peptide.

In terms of biological role, probably participates in a plant defense mechanism. The protein is Kalata-B17 of Oldenlandia affinis.